The sequence spans 466 residues: Probable WRKY transcription factor 32 (466 aa).

2 disordered regions span residues methionine 1 to leucine 45 and serine 140 to proline 166. Positions aspartate 8–leucine 38 are enriched in basic and acidic residues. Positions valine 162–proline 226 form a DNA-binding region, WRKY 1. Cysteine 193, cysteine 198, histidine 221, and histidine 223 together coordinate Zn(2+). Positions histidine 284–asparagine 317 are disordered. The WRKY 2 DNA-binding region spans glycine 325–proline 390. Zn(2+) is bound by residues cysteine 356, cysteine 361, histidine 385, and histidine 387. Residues threonine 410 to lysine 439 form a disordered region. Positions glutamine 419–serine 429 are enriched in polar residues.

It belongs to the WRKY group I family.

It localises to the nucleus. In terms of biological role, transcription factor. Interacts specifically with the W box (5'-(T)TGAC[CT]-3'), a frequently occurring elicitor-responsive cis-acting element. The sequence is that of Probable WRKY transcription factor 32 (WRKY32) from Arabidopsis thaliana (Mouse-ear cress).